Reading from the N-terminus, the 229-residue chain is 3-isopropylmalate dehydratase small subunit (229 aa).

The segment at 198-229 (LPVKREPEQPIESAREGEYPDWQGPLADRGII) is disordered. The span at 200–215 (VKREPEQPIESAREGE) shows a compositional bias: basic and acidic residues.

This sequence belongs to the LeuD family. LeuD type 1 subfamily. As to quaternary structure, heterodimer of LeuC and LeuD.

The catalysed reaction is (2R,3S)-3-isopropylmalate = (2S)-2-isopropylmalate. Its pathway is amino-acid biosynthesis; L-leucine biosynthesis; L-leucine from 3-methyl-2-oxobutanoate: step 2/4. Catalyzes the isomerization between 2-isopropylmalate and 3-isopropylmalate, via the formation of 2-isopropylmaleate. This Bifidobacterium adolescentis (strain ATCC 15703 / DSM 20083 / NCTC 11814 / E194a) protein is 3-isopropylmalate dehydratase small subunit.